The sequence spans 513 residues: ATP synthase subunit alpha 2 (513 aa).

Residue 169–176 coordinates ATP; it reads GDRQTGKT.

This sequence belongs to the ATPase alpha/beta chains family. F-type ATPases have 2 components, CF(1) - the catalytic core - and CF(0) - the membrane proton channel. CF(1) has five subunits: alpha(3), beta(3), gamma(1), delta(1), epsilon(1). CF(0) has three main subunits: a(1), b(2) and c(9-12). The alpha and beta chains form an alternating ring which encloses part of the gamma chain. CF(1) is attached to CF(0) by a central stalk formed by the gamma and epsilon chains, while a peripheral stalk is formed by the delta and b chains.

It localises to the cell inner membrane. It catalyses the reaction ATP + H2O + 4 H(+)(in) = ADP + phosphate + 5 H(+)(out). In terms of biological role, produces ATP from ADP in the presence of a proton gradient across the membrane. The alpha chain is a regulatory subunit. In Shewanella frigidimarina (strain NCIMB 400), this protein is ATP synthase subunit alpha 2.